The chain runs to 228 residues: MSVYSLPPAPPSDEHQLFQRAQALSGFTLGELATRAQWVIPADLKRVKGWVGMLLEFYLGASAGSKPEQDFADIGIELKTIPISAQGKPLETTFVCVAPLTGNSGVTWESSHVRHKLARVLWVPVEGERHIPLAERRVGAPLLWSPNVEEEELLRRDWEELMDLIVLGKVESITARHGQVLQLRPKAANSRALTEAIGEFGQPIMTLPRGFYLKKTLTAPMLARHFLL.

It belongs to the MutH family.

It is found in the cytoplasm. Its function is as follows. Sequence-specific endonuclease that cleaves unmethylated GATC sequences. It is involved in DNA mismatch repair. The protein is DNA mismatch repair protein MutH of Yersinia pseudotuberculosis serotype O:1b (strain IP 31758).